The primary structure comprises 207 residues: Ribonuclease HII (207 aa).

The 188-residue stretch at 20 to 207 (QLFAGVDEVG…KPVKRVLGIE (188 aa)) folds into the RNase H type-2 domain. Asp26, Glu27, and Asp118 together coordinate a divalent metal cation.

The protein belongs to the RNase HII family. It depends on Mn(2+) as a cofactor. Mg(2+) is required as a cofactor.

The protein resides in the cytoplasm. The catalysed reaction is Endonucleolytic cleavage to 5'-phosphomonoester.. Its function is as follows. Endonuclease that specifically degrades the RNA of RNA-DNA hybrids. This Aliivibrio fischeri (strain MJ11) (Vibrio fischeri) protein is Ribonuclease HII.